Consider the following 261-residue polypeptide: Bcl-2-binding component 3, isoforms 3/4 (261 aa).

The disordered stretch occupies residues 27-261 (QICGPRERHG…ASAGDFLCTM (235 aa)). Low complexity predominate over residues 40 to 50 (PGGQLPGARRG). Positions 53-63 (PRRPAPLPARP) are enriched in pro residues. Positions 64-73 (PGALGSVLRP) are enriched in low complexity. 2 stretches are compositionally biased toward basic residues: residues 74–87 (LRAR…RPHP) and 95–106 (RPHRPTRRHRRP). Residues 124-146 (PGRSSALALAGGAAPGVARAQRP) show a composition bias toward low complexity. The span at 147–171 (GGSGGRSHPGGPGSPRGGGTVGPGD) shows a compositional bias: gly residues. The span at 172–197 (RGPAAADGGRPQRTVRAAETRGAAAA) shows a compositional bias: low complexity.

Does not interact with BCL2.

Its function is as follows. Does not affect cell growth. The protein is Bcl-2-binding component 3, isoforms 3/4 (BBC3) of Homo sapiens (Human).